The following is a 156-amino-acid chain: S-ribosylhomocysteine lyase (156 aa).

The Fe cation site is built by histidine 56, histidine 60, and cysteine 123.

It belongs to the LuxS family. As to quaternary structure, homodimer. The cofactor is Fe cation.

The catalysed reaction is S-(5-deoxy-D-ribos-5-yl)-L-homocysteine = (S)-4,5-dihydroxypentane-2,3-dione + L-homocysteine. Involved in the synthesis of autoinducer 2 (AI-2) which is secreted by bacteria and is used to communicate both the cell density and the metabolic potential of the environment. The regulation of gene expression in response to changes in cell density is called quorum sensing. Catalyzes the transformation of S-ribosylhomocysteine (RHC) to homocysteine (HC) and 4,5-dihydroxy-2,3-pentadione (DPD). The chain is S-ribosylhomocysteine lyase from Staphylococcus aureus (strain Mu3 / ATCC 700698).